Consider the following 523-residue polypeptide: 2-isopropylmalate synthase (523 aa).

Positions 5–267 constitute a Pyruvate carboxyltransferase domain; sequence VIIFDTTLRD…ETGINAKEIH (263 aa). The Mn(2+) site is built by Asp14, His202, His204, and Asn238. Residues 392-523 are regulatory domain; the sequence is ELQQLVVHSD…QQNKQEFGSV (132 aa).

It belongs to the alpha-IPM synthase/homocitrate synthase family. LeuA type 1 subfamily. Homodimer. It depends on Mn(2+) as a cofactor.

It localises to the cytoplasm. The enzyme catalyses 3-methyl-2-oxobutanoate + acetyl-CoA + H2O = (2S)-2-isopropylmalate + CoA + H(+). The protein operates within amino-acid biosynthesis; L-leucine biosynthesis; L-leucine from 3-methyl-2-oxobutanoate: step 1/4. Functionally, catalyzes the condensation of the acetyl group of acetyl-CoA with 3-methyl-2-oxobutanoate (2-ketoisovalerate) to form 3-carboxy-3-hydroxy-4-methylpentanoate (2-isopropylmalate). The polypeptide is 2-isopropylmalate synthase (Shewanella halifaxensis (strain HAW-EB4)).